The following is a 388-amino-acid chain: Mannitol-1-phosphate 5-dehydrogenase (388 aa).

3-14 is a binding site for NAD(+); that stretch reads ALHFGAGNIGRG.

The protein belongs to the mannitol dehydrogenase family.

The enzyme catalyses D-mannitol 1-phosphate + NAD(+) = beta-D-fructose 6-phosphate + NADH + H(+). The protein is Mannitol-1-phosphate 5-dehydrogenase of Buchnera aphidicola subsp. Schizaphis graminum (strain Sg).